The primary structure comprises 618 residues: Proline--tRNA ligase (618 aa).

The protein belongs to the class-II aminoacyl-tRNA synthetase family. ProS type 1 subfamily. Homodimer.

It is found in the cytoplasm. The catalysed reaction is tRNA(Pro) + L-proline + ATP = L-prolyl-tRNA(Pro) + AMP + diphosphate. Functionally, catalyzes the attachment of proline to tRNA(Pro) in a two-step reaction: proline is first activated by ATP to form Pro-AMP and then transferred to the acceptor end of tRNA(Pro). As ProRS can inadvertently accommodate and process non-cognate amino acids such as alanine and cysteine, to avoid such errors it has two additional distinct editing activities against alanine. One activity is designated as 'pretransfer' editing and involves the tRNA(Pro)-independent hydrolysis of activated Ala-AMP. The other activity is designated 'posttransfer' editing and involves deacylation of mischarged Ala-tRNA(Pro). The misacylated Cys-tRNA(Pro) is not edited by ProRS. The protein is Proline--tRNA ligase of Streptococcus pyogenes serotype M4 (strain MGAS10750).